A 1457-amino-acid chain; its full sequence is DNA-directed RNA polymerase III subunit RPC1 (1457 aa).

Residues cysteine 67, cysteine 70, cysteine 77, histidine 80, cysteine 107, cysteine 110, and cysteine 154 each contribute to the Zn(2+) site. The Mg(2+) site is built by aspartate 508, aspartate 510, and aspartate 512. The interval 854–866 is bridging helix; that stretch reads PPEFLFHSISGRE.

Belongs to the RNA polymerase beta' chain family. Component of the RNA polymerase III (Pol III) complex consisting of 17 subunits.

The protein localises to the nucleus. It carries out the reaction RNA(n) + a ribonucleoside 5'-triphosphate = RNA(n+1) + diphosphate. Its function is as follows. DNA-dependent RNA polymerase catalyzes the transcription of DNA into RNA using the four ribonucleoside triphosphates as substrates. Largest and catalytic core component of RNA polymerase III which synthesizes small RNAs, such as 5S rRNA and tRNAs. Forms the polymerase active center together with the second largest subunit. A single-stranded DNA template strand of the promoter is positioned within the central active site cleft of Pol III. A bridging helix emanates from RPC1 and crosses the cleft near the catalytic site and is thought to promote translocation of Pol III by acting as a ratchet that moves the RNA-DNA hybrid through the active site by switching from straight to bent conformations at each step of nucleotide addition. In Debaryomyces hansenii (strain ATCC 36239 / CBS 767 / BCRC 21394 / JCM 1990 / NBRC 0083 / IGC 2968) (Yeast), this protein is DNA-directed RNA polymerase III subunit RPC1 (RPC1).